The sequence spans 550 residues: MQKGPCGTELGRLSSKQNMDSAQPTKLDFLTVPATPFSIGVLASIVVLVTVVIGPKAVIDTVLNSYLSLVHRIPAADGKKYMSGPAYTFPNGQMVDKFLAARTRSWEWEEKYGKTYRIWAASIPEVVITDPKDVEVLYQQSTDHNKAPQANAGWLLTQLLGSGLGLINGTRWSTLRKTLDPMFSHRAALQYLRDSLDAGAQDYVAGIHQFAKADGQVQTADGKVMVINATQALQRYPFFEVASMFYGKMSEAEHERLWDLGRRYSEVFAAIVSGGIHRSKLTRYLNTKAWNNARDYQKAWRDFNREIYTARKMTAPDTPIVALTEAAERGELTPNEVTDTIAESTFANLDIVTHVISSCIILLADSPEVQNDLLQEMEKNKADRENYITRKDTLLHYCLLESLRLRPVLCLKEYWLTQVKAFTFPENPPREKILGNFVVPKDTTIIVDAFAINIRNPFWGPDNRAYRPSRFAGIKQSQLRYNLATFGYGPRKCLGQHIADKIVKAVVYHLFSKYRVSLMPMQAVEGDFKVDKTSWVALYDVDLKLEPRES.

A helical transmembrane segment spans residues 39 to 59; that stretch reads IGVLASIVVLVTVVIGPKAVI. Cys-493 serves as a coordination point for heme.

This sequence belongs to the cytochrome P450 family. Requires heme as cofactor.

The protein resides in the membrane. It participates in secondary metabolite biosynthesis. Functionally, cytochrome P450 monooxygenase; part of the gene cluster that mediates the biosynthesis of hexadehydro-astechrome (HAS), a tryptophan-derived iron(III)-complex that acts as a virulence factor in infected mice. Within the pathway, hasH, with the O-methyltransferase hasC and the FAD-linked oxidoreductase hasG, convert the hasE-prenylated Trp-Ala dipeptide into an O-methylated diketopiperazine that is then released from the hasD NRPS. The HAS biosynthesis begins with the synthesis of a tethered Trp-Ala dipeptide by the NRPS hasD. The 7-dimethylallyltryptophan synthase hasE then catalyzes the prenylation of the hasD-tethered tryptophan or the resulting tethered Trp-Ala dipeptide at the C-7 position of the indole moiety. HAS biosynthesis continues via tethered intermediates with the succesive action of the cytochrome P450 monooxygenase hasH, the O-methyltransferase hasC, and the FAD-linked oxidoreductase hasG. The resulting O-methylated diketopiperazine is then released from hasD. Finally, three O-methylated diketopiperazine molecules assemble in a trimeric complex with Fe(III) to produce hexadehydro-astechrome. The polypeptide is Cytochrome P450 monooxygenase hasH (Aspergillus fumigatus (strain CBS 144.89 / FGSC A1163 / CEA10) (Neosartorya fumigata)).